The following is a 486-amino-acid chain: tRNA sulfurtransferase (486 aa).

The 107-residue stretch at 60–166 (QKICAMLINI…DNQLFIIIKR (107 aa)) folds into the THUMP domain. ATP-binding positions include 184–185 (LI), Lys266, Gly288, and Gln297. A disulfide bond links Cys345 and Cys458. Residues 406–484 (LDSTDVVLDI…GFSNVKIYRP (79 aa)) form the Rhodanese domain. Cys458 acts as the Cysteine persulfide intermediate in catalysis.

This sequence belongs to the ThiI family.

The protein resides in the cytoplasm. The catalysed reaction is [ThiI sulfur-carrier protein]-S-sulfanyl-L-cysteine + a uridine in tRNA + 2 reduced [2Fe-2S]-[ferredoxin] + ATP + H(+) = [ThiI sulfur-carrier protein]-L-cysteine + a 4-thiouridine in tRNA + 2 oxidized [2Fe-2S]-[ferredoxin] + AMP + diphosphate. The enzyme catalyses [ThiS sulfur-carrier protein]-C-terminal Gly-Gly-AMP + S-sulfanyl-L-cysteinyl-[cysteine desulfurase] + AH2 = [ThiS sulfur-carrier protein]-C-terminal-Gly-aminoethanethioate + L-cysteinyl-[cysteine desulfurase] + A + AMP + 2 H(+). Its pathway is cofactor biosynthesis; thiamine diphosphate biosynthesis. Its function is as follows. Catalyzes the ATP-dependent transfer of a sulfur to tRNA to produce 4-thiouridine in position 8 of tRNAs, which functions as a near-UV photosensor. Also catalyzes the transfer of sulfur to the sulfur carrier protein ThiS, forming ThiS-thiocarboxylate. This is a step in the synthesis of thiazole, in the thiamine biosynthesis pathway. The sulfur is donated as persulfide by IscS. This is tRNA sulfurtransferase from Blochmanniella pennsylvanica (strain BPEN).